We begin with the raw amino-acid sequence, 496 residues long: Probable E3 ubiquitin-protein ligase ARI12 (496 aa).

A TRIAD supradomain region spans residues 110-319 (NEYFCGACGE…GDLHFCTFDA (210 aa)). Zn(2+)-binding residues include Cys-114, Cys-117, Cys-131, His-133, Cys-136, Cys-139, Cys-162, Cys-172, Cys-240, Cys-243, His-248, Cys-253, Cys-267, Cys-270, Cys-286, and Cys-289. The RING-type 1 zinc-finger motif lies at 114–172 (CGACGESHPHKNLASVSCGHRICTRCWTSHINKIISEKPAAEWNLWLKCPVRVGLHASC). An IBR-type zinc finger spans residues 191–253 (FNYNQYLLRS…REDAHSPVDC (63 aa)). The RING-type 2; atypical zinc-finger motif lies at 267–297 (CPKCKLRIPRNQDNSLKMKCLPCNYVFCWFC).

The protein belongs to the RBR family. Ariadne subfamily. Zn(2+) serves as cofactor. Preferentially expressed in roots.

The catalysed reaction is [E2 ubiquitin-conjugating enzyme]-S-ubiquitinyl-L-cysteine + [acceptor protein]-L-lysine = [E2 ubiquitin-conjugating enzyme]-L-cysteine + [acceptor protein]-N(6)-ubiquitinyl-L-lysine.. The protein operates within protein modification; protein ubiquitination. Its function is as follows. Might act as an E3 ubiquitin-protein ligase, or as part of E3 complex, which accepts ubiquitin from specific E2 ubiquitin-conjugating enzymes and then transfers it to substrates. This is Probable E3 ubiquitin-protein ligase ARI12 (ARI12) from Arabidopsis thaliana (Mouse-ear cress).